We begin with the raw amino-acid sequence, 66 residues long: Large ribosomal subunit protein bL35 (66 aa).

The span at 1–16 (MPKQKTHRASAKRFKR) shows a compositional bias: basic residues. The disordered stretch occupies residues 1–21 (MPKQKTHRASAKRFKRTGSGG).

Belongs to the bacterial ribosomal protein bL35 family.

This is Large ribosomal subunit protein bL35 from Streptococcus gordonii (strain Challis / ATCC 35105 / BCRC 15272 / CH1 / DL1 / V288).